The chain runs to 419 residues: Gamma-glutamyl phosphate reductase (419 aa).

The protein belongs to the gamma-glutamyl phosphate reductase family.

Its subcellular location is the cytoplasm. It catalyses the reaction L-glutamate 5-semialdehyde + phosphate + NADP(+) = L-glutamyl 5-phosphate + NADPH + H(+). Its pathway is amino-acid biosynthesis; L-proline biosynthesis; L-glutamate 5-semialdehyde from L-glutamate: step 2/2. Its function is as follows. Catalyzes the NADPH-dependent reduction of L-glutamate 5-phosphate into L-glutamate 5-semialdehyde and phosphate. The product spontaneously undergoes cyclization to form 1-pyrroline-5-carboxylate. The sequence is that of Gamma-glutamyl phosphate reductase from Gloeobacter violaceus (strain ATCC 29082 / PCC 7421).